Reading from the N-terminus, the 194-residue chain is Ribonuclease HII (194 aa).

In terms of domain architecture, RNase H type-2 spans 3 to 193 (ILTAGVDEAG…VRNLLAQQAL (191 aa)). Positions 9, 10, and 101 each coordinate a divalent metal cation.

This sequence belongs to the RNase HII family. It depends on Mn(2+) as a cofactor. The cofactor is Mg(2+).

It localises to the cytoplasm. It carries out the reaction Endonucleolytic cleavage to 5'-phosphomonoester.. In terms of biological role, endonuclease that specifically degrades the RNA of RNA-DNA hybrids. The sequence is that of Ribonuclease HII (rnhB) from Neisseria meningitidis serogroup A / serotype 4A (strain DSM 15465 / Z2491).